A 303-amino-acid chain; its full sequence is Lipoyl synthase (303 aa).

Positions 35, 40, 46, 61, 65, 68, and 273 each coordinate [4Fe-4S] cluster. One can recognise a Radical SAM core domain in the interval 47–262 (FRERQATFLI…KELAEKMGFR (216 aa)).

This sequence belongs to the radical SAM superfamily. Lipoyl synthase family. It depends on [4Fe-4S] cluster as a cofactor.

It localises to the cytoplasm. The catalysed reaction is [[Fe-S] cluster scaffold protein carrying a second [4Fe-4S](2+) cluster] + N(6)-octanoyl-L-lysyl-[protein] + 2 oxidized [2Fe-2S]-[ferredoxin] + 2 S-adenosyl-L-methionine + 4 H(+) = [[Fe-S] cluster scaffold protein] + N(6)-[(R)-dihydrolipoyl]-L-lysyl-[protein] + 4 Fe(3+) + 2 hydrogen sulfide + 2 5'-deoxyadenosine + 2 L-methionine + 2 reduced [2Fe-2S]-[ferredoxin]. The protein operates within protein modification; protein lipoylation via endogenous pathway; protein N(6)-(lipoyl)lysine from octanoyl-[acyl-carrier-protein]: step 2/2. Functionally, catalyzes the radical-mediated insertion of two sulfur atoms into the C-6 and C-8 positions of the octanoyl moiety bound to the lipoyl domains of lipoate-dependent enzymes, thereby converting the octanoylated domains into lipoylated derivatives. This is Lipoyl synthase from Geobacter sulfurreducens (strain ATCC 51573 / DSM 12127 / PCA).